A 555-amino-acid chain; its full sequence is Bifunctional epoxide hydrolase 2 (555 aa).

The interval 1-224 (MTLRAAVFDL…KVTGIQLLNT (224 aa)) is phosphatase. Residues Asp-9 and Asp-11 each coordinate Mg(2+). The residue at position 43 (Lys-43) is an N6-acetyllysine. Lys-55 carries the post-translational modification N6-succinyllysine. 123–124 (TN) serves as a coordination point for phosphate. Asp-185 contacts Mg(2+). Lys-191 and Lys-215 each carry N6-acetyllysine. Residues 235 to 555 (SDMSHGYVTV…ARNPPVVSKM (321 aa)) form an epoxide hydrolase region. One can recognise an AB hydrolase-1 domain in the interval 259–531 (PAVCLCHGFP…CGHWTQMDKP (273 aa)). Asp-335 serves as the catalytic Nucleophile. Phosphoserine is present on Ser-370. Substrate is bound at residue Tyr-383. 2 positions are modified to N6-succinyllysine: Lys-421 and Lys-455. Residue Tyr-466 is the Proton donor of the active site. Cys-522 is lipidated: S-(15-deoxy-Delta12,14-prostaglandin J2-9-yl)cysteine. Residue His-524 is the Proton acceptor of the active site. A Microbody targeting signal motif is present at residues 553 to 555 (SKM). The residue at position 554 (Lys-554) is an N6-succinyllysine.

Belongs to the AB hydrolase superfamily. Epoxide hydrolase family. Homodimer. Mg(2+) is required as a cofactor. Post-translationally, the N-terminus is blocked. In terms of processing, the covalent modification of cysteine by 15-deoxy-Delta12,14-prostaglandin-J2 is autocatalytic and reversible. It may occur as an alternative to other cysteine modifications, such as S-nitrosylation and S-palmitoylation.

It is found in the cytoplasm. It localises to the peroxisome. It catalyses the reaction an epoxide + H2O = an ethanediol. It carries out the reaction (9S,10S)-10-hydroxy-9-(phosphooxy)octadecanoate + H2O = (9S,10S)-9,10-dihydroxyoctadecanoate + phosphate. The enzyme catalyses 12-phosphooxy-(9Z)-octadecenoate + H2O = 12-hydroxy-(9Z)-octadecenoate + phosphate. The catalysed reaction is 12-phosphooxy-(9E)-octadecenoate + H2O = 12-hydroxy-(9E)-octadecenoate + phosphate. It catalyses the reaction 12-(phosphooxy)octadecanoate + H2O = 12-hydroxyoctadecanoate + phosphate. It carries out the reaction 8,9-epoxy-(5Z,11Z,14Z)-eicosatrienoate + H2O = 8,9-dihydroxy-(5Z,11Z,14Z)-eicosatrienoate. The enzyme catalyses 11,12-epoxy-(5Z,8Z,14Z)-eicosatrienoate + H2O = 11,12-dihydroxy-(5Z,8Z,14Z)-eicosatrienoate. The catalysed reaction is 14,15-epoxy-(5Z,8Z,11Z)-eicosatrienoate + H2O = 14,15-dihydroxy-(5Z,8Z,11Z)-eicosatrienoate. It catalyses the reaction 9,10-epoxy-(12Z)-octadecenoate + H2O = 9,10-dihydroxy-(12Z)-octadecenoate. It carries out the reaction 8-hydroxy-(11S,12S)-epoxy-(5Z,9E,14Z)-eicosatrienoate + H2O = (8,11R,12S)-trihydroxy-(5Z,9E,14Z)-eicosatrienoate. The enzyme catalyses 10-hydroxy-(11S,12S)-epoxy- (5Z,8Z,14Z)-eicosatrienoate + H2O = (10,11S,12R)-trihydroxy-(5Z,8Z,14Z)-eicosatrienoate. The catalysed reaction is 1-tetradecanoyl-sn-glycerol 3-phosphate + H2O = 1-tetradecanoyl-sn-glycerol + phosphate. It catalyses the reaction 1-octadecanoyl-sn-glycero-3-phosphate + H2O = 1-octadecanoyl-sn-glycerol + phosphate. It carries out the reaction 1-(5Z,8Z,11Z,14Z-eicosatetraenoyl)-sn-glycero-3-phosphate + H2O = 1-(5Z,8Z,11Z,14Z-eicosatetraenoyl)-sn-glycerol + phosphate. The enzyme catalyses 1-hexadecanoyl-sn-glycero-3-phosphate + H2O = 1-hexadecanoyl-sn-glycerol + phosphate. The catalysed reaction is 1-(9Z-octadecenoyl)-sn-glycero-3-phosphate + H2O = 1-(9Z-octadecenoyl)-sn-glycerol + phosphate. It catalyses the reaction (8S,9R)-epoxy-(5Z,11Z,14Z)-eicosatrienoate + H2O = (8S,9S)-dihydroxy-(5Z,11Z,14Z)-eicosatrienoate. It carries out the reaction (11S,12R)-epoxy-(5Z,8Z,14Z)-eicosatrienoate + H2O = (11R,12R)-dihydroxy-(5Z,8Z,14Z)-eicosatrienoate. The enzyme catalyses (11S,12R)-epoxy-(5Z,8Z,14Z)-eicosatrienoate + H2O = (11S,12S)-dihydroxy-(5Z,8Z,14Z)-eicosatrienoate. The catalysed reaction is (14S,15R)-epoxy-(5Z,8Z,11Z)-eicosatrienoate + H2O = (14R,15R)-dihydroxy-(5Z,8Z,11Z)-eicosatrienoate. It catalyses the reaction (14S,15R)-epoxy-(5Z,8Z,11Z)-eicosatrienoate + H2O = (14S,15S)-dihydroxy-(5Z,8Z,11Z)-eicosatrienoate. It carries out the reaction (11R,12S)-epoxy-(5Z,8Z,14Z)-eicosatrienoate + H2O = (11S,12S)-dihydroxy-(5Z,8Z,14Z)-eicosatrienoate. The enzyme catalyses (11R,12S)-epoxy-(5Z,8Z,14Z)-eicosatrienoate + H2O = (11R,12R)-dihydroxy-(5Z,8Z,14Z)-eicosatrienoate. The catalysed reaction is (8S,9R)-epoxy-(5Z,11Z,14Z)-eicosatrienoate + H2O = (8R,9R)-dihydroxy-(5Z,11Z,14Z)-eicosatrienoate. It catalyses the reaction (14R,15S)-epoxy-(5Z,8Z,11Z)-eicosatrienoate + H2O = (14R,15R)-dihydroxy-(5Z,8Z,11Z)-eicosatrienoate. Inhibited by 1-(1-acetylpiperidin-4-yl)-3-(4-(trifl uoromethoxy)phenyl)urea (TPAU), 1-cyclohexyl-3-dodecylurea (CDU), 12-(3-adamantan-1-yl-ureido)-dodecanoic acid (AUDA), 1-((3S, 5S, 7S)-adamantan-1-yl)-3-(5-(2-(2-ethoxyethoxy) ethoxy)pentyl)urea (AEPU), N-adamantyl-N[']-cyclohexyl urea (ACU), 4-(((1S, 4S)-4-(3-((3S, 5S, 7S)-adamantan-1-yl) ureido)cyclohexyl)oxy)benzoic acid (c-AUCB), 4-(((1R, 4R)-4-(3-((3S, 5S, 7S)-adamantan-1-yl)ureido)cyclohexyl)oxy)benzoic acid (t-AUCB), 4-(((1R, 4R)-4-(3-(4(trifluoromethoxy)phenyl)ureido)cyclohexyl)oxy)benzoic acid (t-TAUCB) and to a lesser extent by 8-(3-((3S, 5S, 7S)-adamantan-1-yl)ureido) octanoic acid (AUOA). Phosphatase activity is inhibited by dodecyl-phosphate, phospholipids such as phospho-lysophosphatidic acids and fatty acids such as palmitic acid and lauric acid. Functionally, bifunctional enzyme. The C-terminal domain has epoxide hydrolase activity and acts on epoxides (alkene oxides, oxiranes) and arene oxides. Plays a role in xenobiotic metabolism by degrading potentially toxic epoxides. Also determines steady-state levels of physiological mediators. Its function is as follows. Bifunctional enzyme. The N-terminal domain has lipid phosphatase activity, with the highest activity towards threo-9,10-phosphonooxy-hydroxy-octadecanoic acid, followed by erythro-9,10-phosphonooxy-hydroxy-octadecanoic acid, 12-phosphonooxy-octadec-9Z-enoic acid and 12-phosphonooxy-octadec-9E-enoic acid. Has phosphatase activity toward lyso-glycerophospholipids with also some lower activity toward lysolipids of sphingolipid and isoprenoid phosphates. The polypeptide is Bifunctional epoxide hydrolase 2 (Homo sapiens (Human)).